The primary structure comprises 149 residues: D-aminoacyl-tRNA deacylase (149 aa).

A Gly-cisPro motif, important for rejection of L-amino acids motif is present at residues G137–P138.

The protein belongs to the DTD family. In terms of assembly, homodimer.

Its subcellular location is the cytoplasm. It carries out the reaction glycyl-tRNA(Ala) + H2O = tRNA(Ala) + glycine + H(+). It catalyses the reaction a D-aminoacyl-tRNA + H2O = a tRNA + a D-alpha-amino acid + H(+). In terms of biological role, an aminoacyl-tRNA editing enzyme that deacylates mischarged D-aminoacyl-tRNAs. Also deacylates mischarged glycyl-tRNA(Ala), protecting cells against glycine mischarging by AlaRS. Acts via tRNA-based rather than protein-based catalysis; rejects L-amino acids rather than detecting D-amino acids in the active site. By recycling D-aminoacyl-tRNA to D-amino acids and free tRNA molecules, this enzyme counteracts the toxicity associated with the formation of D-aminoacyl-tRNA entities in vivo and helps enforce protein L-homochirality. The sequence is that of D-aminoacyl-tRNA deacylase from Janthinobacterium sp. (strain Marseille) (Minibacterium massiliensis).